The chain runs to 283 residues: Elongation factor Ts (283 aa).

Residues 80 to 83 are involved in Mg(2+) ion dislocation from EF-Tu; sequence TDFV.

It belongs to the EF-Ts family.

The protein localises to the cytoplasm. Functionally, associates with the EF-Tu.GDP complex and induces the exchange of GDP to GTP. It remains bound to the aminoacyl-tRNA.EF-Tu.GTP complex up to the GTP hydrolysis stage on the ribosome. The chain is Elongation factor Ts from Citrobacter koseri (strain ATCC BAA-895 / CDC 4225-83 / SGSC4696).